A 394-amino-acid polypeptide reads, in one-letter code: Obg-like ATPase 1 (394 aa).

The OBG-type G domain maps to 21 to 285 (LKAGIVGLAN…MSPEDAEEEL (265 aa)). 30–35 (NVGKST) contacts ATP. 2 residues coordinate Mg(2+): Ser34 and Thr55. Thr89 carries the phosphothreonine modification. A Glycyl lysine isopeptide (Lys-Gly) (interchain with G-Cter in ubiquitin) cross-link involves residue Lys98. Ser116 and Ser119 each carry phosphoserine. Position 233 (Leu233) interacts with ATP. One can recognise a TGS domain in the interval 306 to 389 (DLISFFTCGP…EDGDIIYFRA (84 aa)).

This sequence belongs to the TRAFAC class OBG-HflX-like GTPase superfamily. OBG GTPase family. YchF/OLA1 subfamily. Monomer. Interacts with the 26S proteasome subunit RPT6. Mg(2+) is required as a cofactor.

The protein resides in the cytoplasm. Its function is as follows. Hydrolyzes ATP, and can also hydrolyze GTP with lower efficiency. Has lower affinity for GTP. The protein is Obg-like ATPase 1 of Saccharomyces cerevisiae (strain ATCC 204508 / S288c) (Baker's yeast).